The following is a 595-amino-acid chain: UvrABC system protein C (595 aa).

The region spanning 17–94 (FEPGCYLMKD…IKQYQPRYNI (78 aa)) is the GIY-YIG domain. Residues 199 to 234 (KTIIKNLESRMQAASENLEFEQAKEYRDLIQNIHNL) enclose the UVR domain.

It belongs to the UvrC family. Interacts with UvrB in an incision complex.

Its subcellular location is the cytoplasm. The UvrABC repair system catalyzes the recognition and processing of DNA lesions. UvrC both incises the 5' and 3' sides of the lesion. The N-terminal half is responsible for the 3' incision and the C-terminal half is responsible for the 5' incision. This chain is UvrABC system protein C, found in Staphylococcus carnosus (strain TM300).